The sequence spans 240 residues: Glycerol uptake facilitator protein 3 (240 aa).

The next 2 membrane-spanning stretches (helical) occupy residues 11–31 (LGEF…VAGV) and 41–61 (AGWV…VYAS). The NPA 1 motif lies at 70 to 72 (NPA). 3 helical membrane passes run 88-108 (VIPY…VVWL), 137-157 (FWNF…LLAF), and 162-182 (FTAG…GLSL). The short motif at 191 to 193 (NPA) is the NPA 2 element. A helical transmembrane segment spans residues 219–239 (WVPIAGPLVGGALGALLFNVL).

This sequence belongs to the MIP/aquaporin (TC 1.A.8) family.

It localises to the cell membrane. Its function is as follows. Transporter that facilitates the transmembrane diffusion of water, dihydroxyacetone, glycerol and H(2)O(2). Is not permeable to urea and D/L-lactic acid. The sequence is that of Glycerol uptake facilitator protein 3 from Lactiplantibacillus plantarum (strain ATCC BAA-793 / NCIMB 8826 / WCFS1) (Lactobacillus plantarum).